The chain runs to 212 residues: Uracil phosphoribosyltransferase (212 aa).

Residues Arg-78, Arg-103, and 130-138 (DPMLATGGS) each bind 5-phospho-alpha-D-ribose 1-diphosphate. Uracil-binding positions include Ile-193 and 198-200 (GDA). Residue Asp-199 coordinates 5-phospho-alpha-D-ribose 1-diphosphate.

The protein belongs to the UPRTase family. Mg(2+) serves as cofactor.

The enzyme catalyses UMP + diphosphate = 5-phospho-alpha-D-ribose 1-diphosphate + uracil. It functions in the pathway pyrimidine metabolism; UMP biosynthesis via salvage pathway; UMP from uracil: step 1/1. Allosterically activated by GTP. Its function is as follows. Catalyzes the conversion of uracil and 5-phospho-alpha-D-ribose 1-diphosphate (PRPP) to UMP and diphosphate. The chain is Uracil phosphoribosyltransferase from Ectopseudomonas mendocina (strain ymp) (Pseudomonas mendocina).